Here is a 108-residue protein sequence, read N- to C-terminus: Large ribosomal subunit protein P1B (108 aa).

Residues 72 to 84 (AGSASGAAAGGEA) are compositionally biased toward low complexity. Residues 72–108 (AGSASGAAAGGEAAAEEAAEEEAAEESDDDMGFGLFD) form a disordered region. A compositionally biased stretch (acidic residues) spans 85–102 (AAEEAAEEEAAEESDDDM).

This sequence belongs to the eukaryotic ribosomal protein P1/P2 family. P1 and P2 exist as dimers at the large ribosomal subunit. Post-translationally, phosphorylated.

In terms of biological role, plays an important role in the elongation step of protein synthesis. This is Large ribosomal subunit protein P1B (RPP1B) from Candida albicans (Yeast).